A 539-amino-acid polypeptide reads, in one-letter code: Putative S-adenosyl-L-methionine-dependent methyltransferase MAP_4079 (539 aa).

S-adenosyl-L-methionine-binding positions include D134 and 163–164; that span reads DL. Residues 290–392 form a disordered region; the sequence is AGYGRGRRRP…RGEPGERGGQ (103 aa). Residues 301 to 313 show a composition bias toward polar residues; sequence SATSCRGTCSSPR. The segment covering 341 to 351 has biased composition (gly residues); sequence HGFGNQCGGPD.

Belongs to the UPF0677 family.

Its function is as follows. Exhibits S-adenosyl-L-methionine-dependent methyltransferase activity. The chain is Putative S-adenosyl-L-methionine-dependent methyltransferase MAP_4079 from Mycolicibacterium paratuberculosis (strain ATCC BAA-968 / K-10) (Mycobacterium paratuberculosis).